Consider the following 56-residue polypeptide: Pituitary adenylate cyclase-activating polypeptide (56 aa).

The tract at residues 42 to 50 is important for receptor binding; the sequence is VKKYLAAVL. Leucine amide is present on Leu-50.

It belongs to the glucagon family. Interacts with ADCYAP1R1 (via N-terminal extracellular domain).

It is found in the secreted. PACAP is a neuropeptide involved in diverse array of physiological processes through activating the PACAP subfamily of class B1 G protein-coupled receptors: VIP receptor 1 (VIPR1), VIP receptor 2 (VIPR2), and PACAP type I receptor (ADCYAP1R1). Exerts neuroprotective and general cytoprotective effects due to anti-apoptotic, anti-inflammatory, and antioxidant actions. The sequence is that of Pituitary adenylate cyclase-activating polypeptide (Adcyap1) from Heloderma suspectum (Gila monster).